The chain runs to 62 residues: Large ribosomal subunit protein uL30 (62 aa).

This sequence belongs to the universal ribosomal protein uL30 family. As to quaternary structure, part of the 50S ribosomal subunit.

This is Large ribosomal subunit protein uL30 from Staphylococcus carnosus (strain TM300).